Consider the following 189-residue polypeptide: MRIGVLALQGAFIEHIRMLERLGVETFEIRNLSDLKEIPDGLILPGGESTVMSKLLQDLGLFEKLRSLIMTGTPVMGTCAGLILLAKYIEGGSPSLGTMDITAVRNAYGRQLGSFQATAPFAGAGNIQMTFIRAPMITHVGKNVKVLAEVDGVVVAAREDNQLVLSFHPELGEDTFVHQYFLEMIAGTN.

47-49 (GES) is a binding site for L-glutamine. The active-site Nucleophile is C79. L-glutamine contacts are provided by residues R105 and 132–133 (IR). Catalysis depends on charge relay system residues H168 and E170.

It belongs to the glutaminase PdxT/SNO family. In the presence of PdxS, forms a dodecamer of heterodimers. Only shows activity in the heterodimer.

It carries out the reaction aldehydo-D-ribose 5-phosphate + D-glyceraldehyde 3-phosphate + L-glutamine = pyridoxal 5'-phosphate + L-glutamate + phosphate + 3 H2O + H(+). The enzyme catalyses L-glutamine + H2O = L-glutamate + NH4(+). Its pathway is cofactor biosynthesis; pyridoxal 5'-phosphate biosynthesis. Its function is as follows. Catalyzes the hydrolysis of glutamine to glutamate and ammonia as part of the biosynthesis of pyridoxal 5'-phosphate. The resulting ammonia molecule is channeled to the active site of PdxS. In Methanocorpusculum labreanum (strain ATCC 43576 / DSM 4855 / Z), this protein is Pyridoxal 5'-phosphate synthase subunit PdxT.